Reading from the N-terminus, the 216-residue chain is Uracil phosphoribosyltransferase (216 aa).

Residues arginine 85, arginine 110, and 135–143 each bind 5-phospho-alpha-D-ribose 1-diphosphate; that span reads DPMVATGYS. Uracil contacts are provided by residues isoleucine 200 and 205–207; that span reads GDA. 5-phospho-alpha-D-ribose 1-diphosphate is bound at residue aspartate 206.

Belongs to the UPRTase family. It depends on Mg(2+) as a cofactor.

It carries out the reaction UMP + diphosphate = 5-phospho-alpha-D-ribose 1-diphosphate + uracil. The protein operates within pyrimidine metabolism; UMP biosynthesis via salvage pathway; UMP from uracil: step 1/1. Allosterically activated by GTP. Its function is as follows. Catalyzes the conversion of uracil and 5-phospho-alpha-D-ribose 1-diphosphate (PRPP) to UMP and diphosphate. The protein is Uracil phosphoribosyltransferase of Burkholderia ambifaria (strain MC40-6).